We begin with the raw amino-acid sequence, 773 residues long: Protein YhgF (773 aa).

The S1 motif domain maps to 651-720 (GMILEGAVTN…QRKRIALTMR (70 aa)). A disordered region spans residues 721 to 773 (LDEQPGETNARRGGGNERPQNNRPAAKPRGREAQPAGNSAMMDALAAAMGKKR).

In Escherichia coli (strain K12), this protein is Protein YhgF (yhgF).